Consider the following 255-residue polypeptide: Thiazole synthase (255 aa).

Catalysis depends on K96, which acts as the Schiff-base intermediate with DXP. 1-deoxy-D-xylulose 5-phosphate-binding positions include G157, 183–184 (AG), and 205–206 (NT).

The protein belongs to the ThiG family. In terms of assembly, homotetramer. Forms heterodimers with either ThiH or ThiS.

Its subcellular location is the cytoplasm. It catalyses the reaction [ThiS sulfur-carrier protein]-C-terminal-Gly-aminoethanethioate + 2-iminoacetate + 1-deoxy-D-xylulose 5-phosphate = [ThiS sulfur-carrier protein]-C-terminal Gly-Gly + 2-[(2R,5Z)-2-carboxy-4-methylthiazol-5(2H)-ylidene]ethyl phosphate + 2 H2O + H(+). It functions in the pathway cofactor biosynthesis; thiamine diphosphate biosynthesis. In terms of biological role, catalyzes the rearrangement of 1-deoxy-D-xylulose 5-phosphate (DXP) to produce the thiazole phosphate moiety of thiamine. Sulfur is provided by the thiocarboxylate moiety of the carrier protein ThiS. In vitro, sulfur can be provided by H(2)S. This chain is Thiazole synthase, found in Staphylococcus epidermidis (strain ATCC 12228 / FDA PCI 1200).